A 366-amino-acid chain; its full sequence is tRNA N6-adenosine threonylcarbamoyltransferase (366 aa).

Fe cation contacts are provided by histidine 119 and histidine 123. Substrate is bound by residues 142-146, aspartate 175, glycine 188, aspartate 192, and asparagine 281; that span reads LVSGG. Fe cation is bound at residue aspartate 309.

Belongs to the KAE1 / TsaD family. Fe(2+) is required as a cofactor.

It is found in the cytoplasm. It carries out the reaction L-threonylcarbamoyladenylate + adenosine(37) in tRNA = N(6)-L-threonylcarbamoyladenosine(37) in tRNA + AMP + H(+). Functionally, required for the formation of a threonylcarbamoyl group on adenosine at position 37 (t(6)A37) in tRNAs that read codons beginning with adenine. Is involved in the transfer of the threonylcarbamoyl moiety of threonylcarbamoyl-AMP (TC-AMP) to the N6 group of A37, together with TsaE and TsaB. TsaD likely plays a direct catalytic role in this reaction. This is tRNA N6-adenosine threonylcarbamoyltransferase from Synechococcus sp. (strain JA-3-3Ab) (Cyanobacteria bacterium Yellowstone A-Prime).